A 434-amino-acid chain; its full sequence is UDP-glucose 6-dehydrogenase (434 aa).

Residues 2–19 (NITF…GIIM), V11, D30, K35, T121, and E152 contribute to the NAD(+) site. Substrate is bound by residues 148 to 152 (EFLRE), K204, N208, 249 to 253 (FLNAG), and G257. The active-site Nucleophile is the C260. An NAD(+)-binding site is contributed by K263. K321 provides a ligand contact to substrate. NAD(+) is bound at residue R328.

This sequence belongs to the UDP-glucose/GDP-mannose dehydrogenase family.

It carries out the reaction UDP-alpha-D-glucose + 2 NAD(+) + H2O = UDP-alpha-D-glucuronate + 2 NADH + 3 H(+). The protein operates within nucleotide-sugar biosynthesis; UDP-alpha-D-glucuronate biosynthesis; UDP-alpha-D-glucuronate from UDP-alpha-D-glucose: step 1/1. The polypeptide is UDP-glucose 6-dehydrogenase (udg) (Rickettsia typhi (strain ATCC VR-144 / Wilmington)).